We begin with the raw amino-acid sequence, 368 residues long: Quinolinate synthase (368 aa).

Iminosuccinate contacts are provided by His-46 and Ser-63. Residue Cys-110 participates in [4Fe-4S] cluster binding. Residues 141-143 (YVN) and Ser-162 each bind iminosuccinate. Cys-230 contacts [4Fe-4S] cluster. Iminosuccinate is bound by residues 256–258 (HPE) and Thr-273. Cys-320 contributes to the [4Fe-4S] cluster binding site.

The protein belongs to the quinolinate synthase family. Type 3 subfamily. It depends on [4Fe-4S] cluster as a cofactor.

The protein localises to the cytoplasm. It catalyses the reaction iminosuccinate + dihydroxyacetone phosphate = quinolinate + phosphate + 2 H2O + H(+). It participates in cofactor biosynthesis; NAD(+) biosynthesis; quinolinate from iminoaspartate: step 1/1. Functionally, catalyzes the condensation of iminoaspartate with dihydroxyacetone phosphate to form quinolinate. The chain is Quinolinate synthase from Bacillus cereus (strain ZK / E33L).